We begin with the raw amino-acid sequence, 496 residues long: MTVATQNLTALDVGLAWRNSFAQLGKSFYTPLAPWPLPAPYWVGRSTSTARELGLSESWLDSPELLQVLTGNQPMAGTQPLASVYSGHQFGQWAGQLGDGRAILLGETGGLEVQLKGSGLTPYSRMGDGRAVLRSSIREFLCSEAMQGLGIATSRALCVVGSDAPIRRETVETAAVVTRVAPSFIRFGHFEHFSHHDQHAQLKVLADYVIDRFYPECRASDKFAGNPYAALLEAVSERTAALVAQWQAVGFCHGVLNTDNMSILGLTIDYGPFQFLDAFNPGHVCNHSDQEGRYAFDKQPNIAYWNLFCLGQALLPLIGEQELAIAALESYKTVFPAAFERLMFAKLGLLDASDSTATVDRALLQDILQLLAREQVDYTIFWRRLSHCGVATDAQTVRDLFVDRSAADAWLLRYSERLEHIPQGLAADLMLKTNPKFVLRNYLGEQAIQAAKLKDFSQVETLLMLLESPFEEHPGFDKYADFPPDWASSIEISCSS.

Residues Gly-98, Gly-100, Arg-101, Lys-116, Asp-128, Gly-129, Arg-179, and Arg-186 each coordinate ATP. The active-site Proton acceptor is Asp-259. 2 residues coordinate Mg(2+): Asn-260 and Asp-269. ATP is bound at residue Asp-269.

The protein belongs to the SELO family. Mg(2+) is required as a cofactor. The cofactor is Mn(2+).

It catalyses the reaction L-seryl-[protein] + ATP = 3-O-(5'-adenylyl)-L-seryl-[protein] + diphosphate. The enzyme catalyses L-threonyl-[protein] + ATP = 3-O-(5'-adenylyl)-L-threonyl-[protein] + diphosphate. It carries out the reaction L-tyrosyl-[protein] + ATP = O-(5'-adenylyl)-L-tyrosyl-[protein] + diphosphate. The catalysed reaction is L-histidyl-[protein] + UTP = N(tele)-(5'-uridylyl)-L-histidyl-[protein] + diphosphate. It catalyses the reaction L-seryl-[protein] + UTP = O-(5'-uridylyl)-L-seryl-[protein] + diphosphate. The enzyme catalyses L-tyrosyl-[protein] + UTP = O-(5'-uridylyl)-L-tyrosyl-[protein] + diphosphate. Functionally, nucleotidyltransferase involved in the post-translational modification of proteins. It can catalyze the addition of adenosine monophosphate (AMP) or uridine monophosphate (UMP) to a protein, resulting in modifications known as AMPylation and UMPylation. The chain is Protein nucleotidyltransferase YdiU from Albidiferax ferrireducens (strain ATCC BAA-621 / DSM 15236 / T118) (Rhodoferax ferrireducens).